The primary structure comprises 30 residues: Serum amyloid P-component (30 aa).

The 30-residue stretch at 1–30 folds into the Pentraxin (PTX) domain; it reads APQDLSGKMFIFPQETSTANVXLTARSQDF.

It belongs to the pentraxin family. In terms of assembly, homopentamer. Discoid arrangement of 5 covalently bound subunits. It depends on Ca(2+) as a cofactor.

The protein resides in the secreted. The sequence is that of Serum amyloid P-component from Anarhichas lupus (Atlantic wolffish).